The chain runs to 333 residues: Forkhead box protein unc-130 (333 aa).

Residues 1-126 (MLFSMESILS…MSGHRKSSHA (126 aa)) are disordered. The segment covering 14 to 24 (PKLEPPPKLEP) has biased composition (basic and acidic residues). The span at 37–50 (RSNTRLSEPSTSAS) shows a compositional bias: polar residues. A compositionally biased stretch (basic and acidic residues) spans 52-62 (LEHDLKFGESR). The segment covering 98–110 (SSDDAKDDDDDDD) has biased composition (acidic residues). Positions 127–221 (KPPYSYIALI…DNGSFLRRRK (95 aa)) form a DNA-binding region, fork-head. The disordered stretch occupies residues 304 to 333 (APVSSGQKRTSSSSSPNENGSSAVSDKLSA). Over residues 307–333 (SSGQKRTSSSSSPNENGSSAVSDKLSA) the composition is skewed to low complexity.

Expressed in ventral body wall muscle. Expressed in the structural cells and two neurons of each ray in the male tail.

The protein localises to the nucleus. Functionally, probable transcription factor. Binds to DNA sequence motif 5'-CTGTTTCA-3'. Required for the migration of distal tip cells (DTC) and axonal growth-cones along the dorsal-ventral axis of the body wall, acting by cell autonomous repression of unc-129/TGF-beta expression in ventral body muscle during embyogenesis. Binds to the promoter region of the unc-129 gene. Plays a role in dorsal-ventral patterning and fate specification of the postembryonic mesoderm. Involved in male tail morphogenesis and in embryogenesis. Plays a role in the development of sensory neurons and is required to repress AWA fate and promote ASG fate in the ASG chemosensory neurons. Regulates expression of a class of small RNAs, known as 21U-RNAs. This Caenorhabditis elegans protein is Forkhead box protein unc-130.